We begin with the raw amino-acid sequence, 320 residues long: o-succinylbenzoate synthase (320 aa).

Lys133 functions as the Proton donor in the catalytic mechanism. Asp161, Glu190, and Asp213 together coordinate Mg(2+). Lys235 serves as the catalytic Proton acceptor.

The protein belongs to the mandelate racemase/muconate lactonizing enzyme family. MenC type 1 subfamily. The cofactor is a divalent metal cation.

The catalysed reaction is (1R,6R)-6-hydroxy-2-succinyl-cyclohexa-2,4-diene-1-carboxylate = 2-succinylbenzoate + H2O. It participates in quinol/quinone metabolism; 1,4-dihydroxy-2-naphthoate biosynthesis; 1,4-dihydroxy-2-naphthoate from chorismate: step 4/7. It functions in the pathway quinol/quinone metabolism; menaquinone biosynthesis. Its function is as follows. Converts 2-succinyl-6-hydroxy-2,4-cyclohexadiene-1-carboxylate (SHCHC) to 2-succinylbenzoate (OSB). This is o-succinylbenzoate synthase from Escherichia coli (strain K12 / MC4100 / BW2952).